Reading from the N-terminus, the 695-residue chain is Ubiquitin carboxyl-terminal hydrolase 20 (695 aa).

Disordered stretches follow at residues 1-20 (MLMA…SSIL) and 42-162 (SLAL…SLFY). Low complexity-rich tracts occupy residues 9-20 (PSSILPRSSSIL) and 61-86 (NHDS…SQSV). Positions 112 to 124 (DDIDDDIWGDDDL) are enriched in acidic residues. The USP domain occupies 176–476 (AGLWNLGNSC…DSYILFYARE (301 aa)). The active-site Nucleophile is cysteine 185. Histidine 435 functions as the Proton acceptor in the catalytic mechanism. The segment covering 556 to 571 (SAESSSGEESPMGELL) has biased composition (low complexity). Disordered stretches follow at residues 556 to 585 (SAES…PCTE) and 674 to 695 (AREL…LKTT).

This sequence belongs to the peptidase C19 family.

The catalysed reaction is Thiol-dependent hydrolysis of ester, thioester, amide, peptide and isopeptide bonds formed by the C-terminal Gly of ubiquitin (a 76-residue protein attached to proteins as an intracellular targeting signal).. Recognizes and hydrolyzes the peptide bond at the C-terminal Gly of ubiquitin. Involved in the processing of poly-ubiquitin precursors as well as that of ubiquitinated proteins. The protein is Ubiquitin carboxyl-terminal hydrolase 20 (UBP20) of Arabidopsis thaliana (Mouse-ear cress).